A 353-amino-acid chain; its full sequence is (3aS,4S,5R,7aS)-5-hydroxy-7a-methyl-1-oxo-octahydro-1H-indene-4-carboxyl-CoA dehydrogenase (353 aa).

FMN contacts are provided by residues 22-24 (GMG), 171-173 (AGG), and 194-195 (GT).

Belongs to the nitronate monooxygenase family.

It catalyses the reaction (3aS,4S,5R,7aS)-5-hydroxy-7a-methyl-1-oxo-octahydro-1H-indene-4-carboxyl-CoA + NAD(+) = (5R,7aS)-5-hydroxy-7a-methyl-1-oxo-2,3,5,6,7,7a-hexahydro-1H-indene-carboxyl-CoA + NADH + H(+). Its pathway is steroid metabolism; cholesterol degradation. Functionally, involved in the final steps of cholesterol and steroid degradation. Probably catalyzes the introduction of a double bound into the C ring of 5OH-HIC-CoA, leading to the formation of (5R,7aS)-5-hydroxy-7a-methyl-1-oxo-3,5,6,7-tetrahydro-2H-indene-4-carboxyl-CoA. The polypeptide is (3aS,4S,5R,7aS)-5-hydroxy-7a-methyl-1-oxo-octahydro-1H-indene-4-carboxyl-CoA dehydrogenase (Rhodococcus jostii (strain RHA1)).